Here is a 778-residue protein sequence, read N- to C-terminus: DISP complex protein LRCH3 (778 aa).

10 LRR repeats span residues 56-79, 81-104, 105-127, 128-150, 152-172, 173-195, 197-218, 220-239, 240-264, and 266-290; these read AAVT…AANH, LTDT…ACHF, VSLE…VLNL, QALT…LCNL, LKVL…IGHL, RHLT…IGNL, ALRD…LAEV, LIRL…CYRN, LRHL…CIKG, and IHIF…ERRP. The segment at 56–290 is mediates interaction with DOCK7; that stretch reads AAVTGVLSLS…PDLPDYERRP (235 aa). A phosphoserine mark is found at S324, S415, and S419. Residues 382 to 642 are mediates direct interaction with MYO6; that stretch reads TTEEEENDVK…PATDPTDAIT (261 aa). The interval 511–536 is disordered; sequence QKASHNPQRQQPPGNGECSFPSRRSQ. Residues 514-523 show a composition bias toward polar residues; sequence SHNPQRQQPP. Phosphoserine occurs at positions 608 and 625. In terms of domain architecture, Calponin-homology (CH) spans 645–758; that stretch reads REEELKLIDQ…VTVQALLELA (114 aa). The tract at residues 758-778 is disordered; sequence APPKQPPPQQPQQQQPQLSAV. Residues 768-778 show a composition bias toward low complexity; that stretch reads PQQQQPQLSAV.

Component of the DOCK7-induced septin displacement/DISP complex, at least composed of DOCK7, LRCH3 and MYO6.

The protein resides in the cytoplasm. In terms of biological role, as part of the DISP complex, may regulate the association of septins with actin and thereby regulate the actin cytoskeleton. The protein is DISP complex protein LRCH3 of Mus musculus (Mouse).